The chain runs to 260 residues: D-threitol dehydrogenase (260 aa).

21 to 50 (LVTGAASGIGAAIASAYATKGARIAAVDLN) contacts NAD(+). Catalysis depends on Y166, which acts as the Proton acceptor. NAD(+) is bound at residue K170.

Belongs to the short-chain dehydrogenases/reductases (SDR) family.

It catalyses the reaction D-threitol + NAD(+) = D-erythrulose + NADH + H(+). Its pathway is carbohydrate metabolism; D-threitol degradation. Catalyzes the NAD-dependent reversible oxidation of D-threitol. Involved in the degradation pathway of D-threitol, that allows M.smegmatis to grow on this compound as the sole carbon source. Does not catalyze the oxidation of xylitol, L-sorbitol, and L-sorbose. The sequence is that of D-threitol dehydrogenase from Mycolicibacterium smegmatis (strain ATCC 700084 / mc(2)155) (Mycobacterium smegmatis).